We begin with the raw amino-acid sequence, 751 residues long: Photosystem I P700 chlorophyll a apoprotein A1 (751 aa).

8 consecutive transmembrane segments (helical) span residues isoleucine 73 to alanine 96, leucine 159 to histidine 182, methionine 198 to leucine 222, threonine 294 to tyrosine 312, tryptophan 349 to tyrosine 372, leucine 388 to valine 414, alanine 436 to histidine 458, and phenylalanine 533 to leucine 551. The [4Fe-4S] cluster site is built by cysteine 575 and cysteine 584. 2 helical membrane-spanning segments follow: residues histidine 591 to tryptophan 612 and leucine 665 to phenylalanine 687. Histidine 676 contacts chlorophyll a'. Chlorophyll a is bound by residues methionine 684 and tyrosine 692. Tryptophan 693 is a phylloquinone binding site. A helical transmembrane segment spans residues alanine 725–alanine 745.

The protein belongs to the PsaA/PsaB family. The PsaA/B heterodimer binds the P700 chlorophyll special pair and subsequent electron acceptors. PSI consists of a core antenna complex that captures photons, and an electron transfer chain that converts photonic excitation into a charge separation. The eukaryotic PSI reaction center is composed of at least 11 subunits. Requires P700 is a chlorophyll a/chlorophyll a' dimer, A0 is one or more chlorophyll a, A1 is one or both phylloquinones and FX is a shared 4Fe-4S iron-sulfur center. as cofactor.

The protein localises to the plastid. Its subcellular location is the chloroplast thylakoid membrane. It catalyses the reaction reduced [plastocyanin] + hnu + oxidized [2Fe-2S]-[ferredoxin] = oxidized [plastocyanin] + reduced [2Fe-2S]-[ferredoxin]. Its function is as follows. PsaA and PsaB bind P700, the primary electron donor of photosystem I (PSI), as well as the electron acceptors A0, A1 and FX. PSI is a plastocyanin/cytochrome c6-ferredoxin oxidoreductase, converting photonic excitation into a charge separation, which transfers an electron from the donor P700 chlorophyll pair to the spectroscopically characterized acceptors A0, A1, FX, FA and FB in turn. Oxidized P700 is reduced on the lumenal side of the thylakoid membrane by plastocyanin or cytochrome c6. This Nephroselmis olivacea (Green alga) protein is Photosystem I P700 chlorophyll a apoprotein A1.